Here is a 949-residue protein sequence, read N- to C-terminus: MASAFKGILIRSPPDVCAETVAKVSQCNRAQLVKNSSTGFKNIFKLSEARKFHAPVASHLRSQAVMAPASDPTSTAIKRVFTFGKGRSEGNKGMKSLLGGKGANLAEMASIGLSVPPGLTISTEACQEYQEHGKQLSAGLWEEILEGLRVIEKDMGSYLGDPSKPLLLSVRSGAAISMPGMMDTVLNLGLNDDVVAGLAAKSGERFAYDSYRRFLDMFGNVVMGISHSSFEEKLEKLKQAKGVKLDTELTASDLKEVVEQYKNVYLEVKGEKFPADPERQLQLAIQAVFDSWDSPRAIKYRNINQITGLKGTAVNIQCMVFGNMGNTSGTGVLFTRNPSTGEKKLYGEFLINAQGEDVVAGIRTPEDLDTMRSCMPEAYKELVENCEILERHYKDMMDIEFTVQENRLWMLQCRSGKRTGKGAVKIAVDLVKEGIVDTYTAIKMVEPQHLDQLLHPQFEDPSAYKDRVIATGLPASPGAAVGQIIFSADEAESWQAQGKSVILVRNETSPEDVGGMHAAIGILTARGGMTSHAAVVAGGWGKCCVSGCSEIRVNDTDKVLLVGDKVISEGDWLSLNGSTGEVILGKVPLSPPALSGDLETFMSWADDIRVLKVMANADTPEDALAARNNGAEGIGLCRTEHMFFASDDRIKTVRKMIMAVTSEQRKVALDQLLPYQRSDFEGIFRAMDGLPVTIRLLDPPLHEFLPEGDVEQIVSELTLETGMAEDEIFSRIEKLSEVNPMLGFRGCRLGISYPELTEMQARAIFQAAVSMSNQGVKVFPEIMVPLVGTPQELGHQVSLIRNVAEKVFSETGSSLSYKVGTMIEIPRAALVADEIAMEAEFFSFGTNDLTQMTFGYSRDDVGKFLPVYLSKGILQSDPFEVLDQKGVGQLIKLATEKGRSARPSLKVGICGEHGGEPSSVAFFAEAGLDYVSCSPFRVPIARLAAAQVV.

The N-terminal 74 residues, 1-74 (MASAFKGILI…VMAPASDPTS (74 aa)), are a transit peptide targeting the chloroplast. The residue at position 530 (T530) is a Phosphothreonine; by PDRP1. The active-site Tele-phosphohistidine intermediate is the H532. Positions 638, 695, 824, 845, 846, 847, and 848 each coordinate substrate. Residue E824 coordinates Mg(2+). D848 contributes to the Mg(2+) binding site. C910 serves as the catalytic Proton donor.

This sequence belongs to the PEP-utilizing enzyme family. Homodimer. The cofactor is Mg(2+). In terms of processing, phosphorylation of Thr-530 in the dark inactivates the enzyme. Dephosphorylation upon light stimulation reactivates the enzyme.

The protein resides in the plastid. It localises to the chloroplast. The catalysed reaction is pyruvate + phosphate + ATP = phosphoenolpyruvate + AMP + diphosphate + H(+). Its activity is regulated as follows. Activated by light-induced dephosphorylation. Inhibited by dark-induced phosphorylation. Both reactions are catalyzed by PDRP1. Formation of phosphoenolpyruvate, which is the primary acceptor of CO(2) in C4 and some Crassulacean acid metabolism plants. This is Pyruvate, phosphate dikinase, chloroplastic (PPD) from Mesembryanthemum crystallinum (Common ice plant).